We begin with the raw amino-acid sequence, 450 residues long: Phosphoglucosamine mutase (450 aa).

Serine 102 serves as the catalytic Phosphoserine intermediate. Mg(2+) is bound by residues serine 102, aspartate 242, aspartate 244, and aspartate 246. Serine 102 is modified (phosphoserine).

The protein belongs to the phosphohexose mutase family. Mg(2+) is required as a cofactor. In terms of processing, activated by phosphorylation.

The catalysed reaction is alpha-D-glucosamine 1-phosphate = D-glucosamine 6-phosphate. Catalyzes the conversion of glucosamine-6-phosphate to glucosamine-1-phosphate. The polypeptide is Phosphoglucosamine mutase (Lachnospira eligens (strain ATCC 27750 / DSM 3376 / VPI C15-48 / C15-B4) (Eubacterium eligens)).